Consider the following 468-residue polypeptide: Adenosylhomocysteinase (468 aa).

Residues T57, D132, and E194 each coordinate substrate. An NAD(+)-binding site is contributed by 195–197; sequence TTT. Residues K224 and D228 each contribute to the substrate site. Residues N229, 258–263, E281, N316, 337–339, and N382 each bind NAD(+); these read GFGDVG and IGH.

The protein belongs to the adenosylhomocysteinase family. The cofactor is NAD(+).

The protein resides in the cytoplasm. It carries out the reaction S-adenosyl-L-homocysteine + H2O = L-homocysteine + adenosine. It functions in the pathway amino-acid biosynthesis; L-homocysteine biosynthesis; L-homocysteine from S-adenosyl-L-homocysteine: step 1/1. Functionally, may play a key role in the regulation of the intracellular concentration of adenosylhomocysteine. The protein is Adenosylhomocysteinase of Methylorubrum extorquens (strain CM4 / NCIMB 13688) (Methylobacterium extorquens).